Here is a 1265-residue protein sequence, read N- to C-terminus: Cohesin subunit SA-1 (1265 aa).

Residues 1–16 (MITSELSVLQDSTNES) show a composition bias toward polar residues. Disordered regions lie at residues 1–21 (MITSELSVLQDSTNESAVMHT) and 37–91 (DLEV…EGDP). Positions 62–73 (TPGDRSRAEPGS) are enriched in basic and acidic residues. In terms of domain architecture, SCD spans 303 to 388 (FVHRYRDAIA…NRFKDRIVSM (86 aa)). Disordered regions lie at residues 1063–1097 (GDEDRLSVNSGGSNSKGSSVRSKKGRPPLHKKRVI) and 1111–1130 (DTIQTPGALTTPQLTSTVLR). The segment covering 1069 to 1082 (SVNSGGSNSKGSSV) has biased composition (low complexity). Residues 1083 to 1095 (RSKKGRPPLHKKR) are compositionally biased toward basic residues. The segment covering 1111–1129 (DTIQTPGALTTPQLTSTVL) has biased composition (polar residues).

It belongs to the SCC3 family. In terms of assembly, interacts directly with RAD21 in cohesin complex. Cohesin complexes are composed of a heterodimer between and SMC3, which are attached via their hinge domain, and RAD21 which link them at their heads, and one STAG protein (STAG1 OR STAG2). In cohesin complexes, STAG1 is mutually exclusive with STAG2. In terms of processing, phosphorylated by PLK1. The large dissociation of cohesin from chromosome arms during prophase is partly due to its phosphorylation.

Its subcellular location is the nucleus. It localises to the chromosome. The protein localises to the centromere. Functionally, component of cohesin complex, a complex required for the cohesion of sister chromatids after DNA replication. The cohesin complex apparently forms a large proteinaceous ring within which sister chromatids can be trapped. At anaphase, the complex is cleaved and dissociates from chromatin, allowing sister chromatids to segregate. The cohesin complex may also play a role in spindle pole assembly during mitosis. The polypeptide is Cohesin subunit SA-1 (stag1) (Xenopus laevis (African clawed frog)).